The sequence spans 1024 residues: MRFFSLFIHRPVATWLLTLTIVLAGFLGFRLLPVAPLPQVDFPVIVVTASLPGASPEIMASSVATPLERALGRIAGVSEMTSSSSLGSTHVILLFDFDRDINGAARDVQGAINAAQSLLPSGMPNRPSYRKVNPSDAPIMIMTLTSDTYSPGQLYDYASTKLAQRLAQIDGVGDVTVGGSSLPAVRVDLNPQALFNQGVSLDAVRSTIANANVRKPQGAIEDSQLRWWIKTNDELHTAAEYRPLVIHYRNGAAVRLQDVATVTDSVQDVRNAGMSNARPAVLLVIRKSPQANIIDTVDRIRGEVPELRNTLPASIGLDIAQDSSRTIRASLHEVEQSLAISVGLVVLVVFAFLRSGRATLIPAVAVPVSLIGTFAAMYLCGFSLNNLSLMALTVATGFVVDDAIVVLENISRHVEAGMKPLLAALKGVREVGFTVISMSISLVAVFLPLLLMDGIIGRFFKEFAITLSVSIAISLVISLTLTPMMCARLLRPNAPRQQPRLRGFGRILMAIQRGYGRGLHWVLDHARWGLLVFVATLGLTVYLYISIPKTFMPEQDTGRLMGFIQADQSISFQAMRGKLETFMRIVRDDPAVESVVGFTGGSDTNSGSMFIALKPLSARSDNAQQVISRLREKLTKEPGANLWLMAVQDIRIGARQSNAGYQYSLLSDSLDDLRQWEPKIRRAFSALPELVDVNSDQQDKGAEMALTYDRTSMARLGIDVADVNDLLNNAFGQRQISTIYQPLNQYKVVMGVDPRYSQDISALNQMYLINKEGRSIPLSAFAKWQPANAPLSVEHEGLSAASTISFNLPEGVSLSQASAAIERSVTSLGVPASVRGSFSGTAAVFEQTQSSQLWLILAAIATVYIVLGILYESYVHPLTILSTLPSAGVGALLALELFNAPFSLIALIGILLLIGIVKKNAIMMVDFALQAQRQEGMTAREAIFQASLLRFRPIIMTTLAALLGALPLALGSGDGAELRQPLGITIVGGLVMSQLLTLFTTPVVYLYMDKLRRRPRWLPVEEKS.

Transmembrane regions (helical) follow at residues 15–35, 333–353, 360–380, 387–407, 431–451, 463–483, 528–548, 853–873, 897–917, 953–973, and 984–1004; these read WLLT…LPVA, EVEQ…FAFL, LIPA…MYLC, LSLM…IVVL, VGFT…PLLL, FAIT…TLTP, WGLL…ISIP, LWLI…LYES, LFNA…IGIV, PIIM…LGSG, and ITIV…TPVV.

This sequence belongs to the resistance-nodulation-cell division (RND) (TC 2.A.6) family. MdtC subfamily. In terms of assembly, part of a tripartite efflux system composed of MdtA, MdtB and MdtC. MdtC forms a heteromultimer with MdtB.

It localises to the cell inner membrane. This is Multidrug resistance protein MdtC from Erwinia tasmaniensis (strain DSM 17950 / CFBP 7177 / CIP 109463 / NCPPB 4357 / Et1/99).